A 946-amino-acid polypeptide reads, in one-letter code: MAGSIGERREDFKVLNLLGKGSFACVYRAQSINTGIDVAIKMIDKKAMQKVGMVQRVRNEVEIHCQLKHPSILELYNYFEDSNYVYLILEMCHNGEMNRFLKNRKKPFSEDEARHFMHQIVTGMLYLHSHGILHRDLTLSNLLLSSDMNIKIADFGLATQLKMPNEKHFTMCGTPNYIAPEIATRSAHGLESDVWSLGCMLYTFLVGRPPFDTDTVKNTLNKIVLADYEMPDFVSREAKDLIFQLLRKNPADRLSLSSVLDHAFMTGFSNVQSKVMGAVEDSIDSGHATISTGFTGSSGVSISGRFQEKRILSGPSLPNKVNIFQFKDKHPAERSNGGSFHNTQRENNDFSEGNGRKTVACEDRPHSRYLRRAHSSDRSGTSQSQTYGKPSSFSERCHSVEMLAKPSNLKGYCTSSPPKSYGDIPQMFTDERSLERHTSPPVKEKTPSEFMCPAKQITPRSGDKCQAETVQQWFGAMQLNGKFKNTPDTSSVSNMGGDFYSQQTMQNGAPQYAWNDVKRKKDTDSSVESVLRGISKLPSGQHKAEKSQFGEQSKARVPQQAFGSSTLRSIISPLNAERLKPIRQKTKNAVVSILETGEVCMEFLKEQNSQERVKEVLRISCDGNLIYVYHPNEGKGFPLVERPPSPPENMRSYTFDSLPEKYWKKYQYAAKFIQLVRSKMPKVTYYTRYAKCMLMENGPNADFEVCFYDGAKIHKTPDLIRVIEKSGKSYTVEGSRLSTLSDQVRSYVNHANESHCVCLSLESAINTEEKKGENISLFPITFGRRPAITESPRTQLTVDSARERKDEQSSANRVLHSSATSPPQIPNINPSLISYEGSVFSATTAQPSPPTSNTLKTHAPDRAQVLKSVFVENVGWASQLNSGAVWVQFNDGSQLVVQPGVSSIIYTAPNGQITRHGENDKLPEYIKSKLQCLSSILMLFASSSSH.

The region spanning 12–265 is the Protein kinase domain; it reads FKVLNLLGKG…LSSVLDHAFM (254 aa). Residues 18–26 and lysine 41 contribute to the ATP site; that span reads LGKGSFACV. Aspartate 136 (proton acceptor) is an active-site residue. A disordered region spans residues 330–395; that stretch reads HPAERSNGGS…TYGKPSSFSE (66 aa). Positions 378–394 are enriched in polar residues; it reads RSGTSQSQTYGKPSSFS. In terms of domain architecture, Cryptic POLO box 1 (CPB1) spans 566–679; that stretch reads TLRSIISPLN…AKFIQLVRSK (114 aa). The region spanning 680 to 792 is the Cryptic POLO box 2 (CPB2) domain; sequence MPKVTYYTRY…GRRPAITESP (113 aa). Residues 789–828 are disordered; it reads TESPRTQLTVDSARERKDEQSSANRVLHSSATSPPQIPNI. Residues 809–828 are compositionally biased toward polar residues; the sequence is SSANRVLHSSATSPPQIPNI. A POLO box domain is found at 864–942; the sequence is QVLKSVFVEN…LSSILMLFAS (79 aa).

It belongs to the protein kinase superfamily. Ser/Thr protein kinase family. CDC5/Polo subfamily. In terms of assembly, homodimer. Post-translationally, ubiquitinated; leading to its degradation by the proteasome.

The protein resides in the cytoplasm. It localises to the cytoskeleton. Its subcellular location is the microtubule organizing center. The protein localises to the centrosome. It is found in the centriole. The catalysed reaction is L-seryl-[protein] + ATP = O-phospho-L-seryl-[protein] + ADP + H(+). The enzyme catalyses L-threonyl-[protein] + ATP = O-phospho-L-threonyl-[protein] + ADP + H(+). Its function is as follows. Serine/threonine-protein kinase that plays a central role in centriole duplication. Able to trigger procentriole formation on the surface of the parental centriole cylinder, leading to the recruitment of centriole biogenesis proteins such as sass6, cpap, ccp110, cep135 and gamma-tubulin. When overexpressed, it is able to induce centrosome amplification through the simultaneous generation of multiple procentrioles adjoining each parental centriole during S phase. Its central role in centriole replication suggests a possible role in tumorigenesis, centrosome aberrations being frequently observed in tumors. Also involved in deuterosome-mediated centriole amplification in multiciliated that can generate more than 100 centrioles. This Xenopus tropicalis (Western clawed frog) protein is Serine/threonine-protein kinase PLK4.